The chain runs to 547 residues: Chaperonin GroEL (547 aa).

Residues 30 to 33 (TLGP), lysine 51, 87 to 91 (DGTTT), glycine 415, 479 to 481 (NAA), and aspartate 495 each bind ATP.

Belongs to the chaperonin (HSP60) family. Forms a cylinder of 14 subunits composed of two heptameric rings stacked back-to-back. Interacts with the co-chaperonin GroES.

The protein resides in the cytoplasm. The enzyme catalyses ATP + H2O + a folded polypeptide = ADP + phosphate + an unfolded polypeptide.. Together with its co-chaperonin GroES, plays an essential role in assisting protein folding. The GroEL-GroES system forms a nano-cage that allows encapsulation of the non-native substrate proteins and provides a physical environment optimized to promote and accelerate protein folding. The protein is Chaperonin GroEL of Bordetella bronchiseptica (strain ATCC BAA-588 / NCTC 13252 / RB50) (Alcaligenes bronchisepticus).